We begin with the raw amino-acid sequence, 137 residues long: ATP synthase epsilon chain, chloroplastic (137 aa).

It belongs to the ATPase epsilon chain family. In terms of assembly, F-type ATPases have 2 components, CF(1) - the catalytic core - and CF(0) - the membrane proton channel. CF(1) has five subunits: alpha(3), beta(3), gamma(1), delta(1), epsilon(1). CF(0) has three main subunits: a, b and c.

Its subcellular location is the plastid. The protein localises to the chloroplast thylakoid membrane. Functionally, produces ATP from ADP in the presence of a proton gradient across the membrane. The polypeptide is ATP synthase epsilon chain, chloroplastic (Hordeum vulgare (Barley)).